The sequence spans 303 residues: Probable cell division protein WhiA (303 aa).

Residues 272-303 constitute a DNA-binding region (H-T-H motif); sequence SLQQIADSLDFAITKSGVNHRLRKINKLAEDL.

It belongs to the WhiA family.

Involved in cell division and chromosome segregation. In Streptococcus equi subsp. zooepidemicus (strain MGCS10565), this protein is Probable cell division protein WhiA.